We begin with the raw amino-acid sequence, 207 residues long: MPIRYPNGQPYSRSPKQGQAKKPLPADTYSGRGMTLEQDIDEANLYYLSQQRAVVHKKPTPVQIVKVDYPKRSAAVIREAYFKQASTTDYNGVYRGAYIDFEAKETKNKTSFPLKNIHPHQVDHMREVSKHGGICFVLIRFFQSAEVFLLDAKHLIDYYDNQDVRKSIKKTEIERLGHQVKTGLHPPIDYLRTLDAVYFNGDAKERT.

Residues 1 to 30 (MPIRYPNGQPYSRSPKQGQAKKPLPADTYS) are disordered. Residues threonine 87, aspartate 89, glutamate 102, and glutamine 121 each contribute to the Mg(2+) site.

It belongs to the RecU family. Mg(2+) is required as a cofactor.

It is found in the cytoplasm. It catalyses the reaction Endonucleolytic cleavage at a junction such as a reciprocal single-stranded crossover between two homologous DNA duplexes (Holliday junction).. Functionally, endonuclease that resolves Holliday junction intermediates in genetic recombination. Cleaves mobile four-strand junctions by introducing symmetrical nicks in paired strands. Promotes annealing of linear ssDNA with homologous dsDNA. Required for DNA repair, homologous recombination and chromosome segregation. In Shouchella clausii (strain KSM-K16) (Alkalihalobacillus clausii), this protein is Holliday junction resolvase RecU.